A 600-amino-acid polypeptide reads, in one-letter code: Adenine deaminase 2 (600 aa).

This sequence belongs to the metallo-dependent hydrolases superfamily. Adenine deaminase family. Mn(2+) serves as cofactor.

It carries out the reaction adenine + H2O + H(+) = hypoxanthine + NH4(+). This Bradyrhizobium sp. (strain ORS 278) protein is Adenine deaminase 2.